The following is a 514-amino-acid chain: Glycosyltransferase-like At3g57200 (514 aa).

The segment at 1 to 23 (MAGLYSSSSSSKPTLSSSPSSSS) is disordered. A signal peptide spans 1–39 (MAGLYSSSSSSKPTLSSSPSSSSSSRLFLLVTLLPLSLA). Residues N156, N187, N251, and N460 are each glycosylated (N-linked (GlcNAc...) asparagine). Positions 457 to 514 (PSKNSSTADSTSGITRESSQETGKRRVLEFHLDVDGESQASAVPPQSPPGLEATQMEL) are disordered. Over residues 458–473 (SKNSSTADSTSGITRE) the composition is skewed to polar residues. Residues 474 to 490 (SSQETGKRRVLEFHLDV) are compositionally biased toward basic and acidic residues.

The protein belongs to the glycosyltransferase 25 family.

The protein resides in the secreted. Its subcellular location is the cell wall. It is found in the cytoplasm. The protein localises to the cell membrane. Its function is as follows. Involved in the coordination between cell elongation and cellulose synthesis by promoting the expression of genes involved in cell elongation and cellulose synthesis. Acts as a regulator of plasmodesmatal permeability. Maybe a glycosyltransferase. The sequence is that of Glycosyltransferase-like At3g57200 from Arabidopsis thaliana (Mouse-ear cress).